A 408-amino-acid polypeptide reads, in one-letter code: MTSKGPEEEHPSVTLFRQYLRIRTVQPKPDYGAAVAFFEERARQLGLGCQKVEVAPGYVVTVLTWPGTNPTLSSILLNSHTDVVPVFKEHWSHDPFEAFKDSEGYIYARGAQDMKCISIQYLEAVRRLKVEGHRFPRTIHMTFVPDEEVGGHQGMELFVQRPEFHALRAGFALDEGIANPTDAFTVFYSERSPWWVRVTSTGRPGHASRFMEDTAAEKLHKVVSSILAFREKEWQRLQSNPHLKEGSVTSVNLTKLEGGVAYNVIPATMSASFDFRVAPDVDFKAFEEQLQSWCQAAGEGVTLEFAQKWMHPQVTPTDDSNPWWAAFSRVCKDMKLTLEPEIMPAATDNRYIRAVGIPALGFSPMNRTPVLLHDHDERLHEAVFLRGVDIYTRLLPALASVPALPSES.

H80 contacts Zn(2+). The active site involves D82. D113 is a Zn(2+) binding site. Catalysis depends on E147, which acts as the Proton acceptor. Positions 148, 175, and 373 each coordinate Zn(2+).

The protein belongs to the peptidase M20A family. In terms of assembly, homodimer. Interacts with SPHK1. Requires Zn(2+) as cofactor.

It is found in the cytoplasm. The catalysed reaction is an N-acyl-L-amino acid + H2O = an L-alpha-amino acid + a carboxylate. It catalyses the reaction N-acetyl-L-methionine + H2O = L-methionine + acetate. It carries out the reaction N-acetyl-L-glutamine + H2O = L-glutamine + acetate. In terms of biological role, catalyzes the hydrolysis of N-acetylated amino acids to acetate and free amino acids. The protein is Aminoacylase-1 (ACY1) of Pongo abelii (Sumatran orangutan).